Here is a 26-residue protein sequence, read N- to C-terminus: CKQAGESCDIFSQNCCVGTCAFICIE.

3 cysteine pairs are disulfide-bonded: Cys1/Cys16, Cys8/Cys20, and Cys15/Cys24. Glu26 bears the Glutamic acid 1-amide mark.

Expressed by the venom duct.

The protein resides in the secreted. Delta-conotoxins bind to site 6 of voltage-gated sodium channels (Nav) and inhibit the inactivation process. This is Delta-conotoxin Am2766 from Conus amadis (Amadis cone).